A 322-amino-acid polypeptide reads, in one-letter code: MLNSFKLSLQYILPKLWLTRLAGWGASKRAGWLTKLVIDLFVKYYKVDMKEAQKPDTASYRTFNEFFVRPLRDEVRPIDTDPNVLVMPADGVISQLGKIEEDKILQAKGHNYSLEALLAGNYLMADLFRNGTFVTTYLSPRDYHRVHMPCNGILREMIYVPGDLFSVNHLTAQNVPNLFARNERVICLFDTEFGPMAQILVGATIVGSIETVWAGTITPPREGIIKRWTWPAGENDDSVALLKGQEMGRFKLGSTVINLFAPGKVNLVEQLESLSVTKIGQPLAVSTETFVTPDAEPAPLPAEEIEAEHDASPLVDDKKDQV.

Catalysis depends on charge relay system; for autoendoproteolytic cleavage activity residues aspartate 90, histidine 147, and serine 254. The Schiff-base intermediate with substrate; via pyruvic acid; for decarboxylase activity role is filled by serine 254. A Pyruvic acid (Ser); by autocatalysis modification is found at serine 254. Residues 293–322 (PDAEPAPLPAEEIEAEHDASPLVDDKKDQV) form a disordered region. Basic and acidic residues predominate over residues 308–322 (EHDASPLVDDKKDQV).

It belongs to the phosphatidylserine decarboxylase family. PSD-B subfamily. Prokaryotic type I sub-subfamily. In terms of assembly, heterodimer of a large membrane-associated beta subunit and a small pyruvoyl-containing alpha subunit. Requires pyruvate as cofactor. Post-translationally, is synthesized initially as an inactive proenzyme. Formation of the active enzyme involves a self-maturation process in which the active site pyruvoyl group is generated from an internal serine residue via an autocatalytic post-translational modification. Two non-identical subunits are generated from the proenzyme in this reaction, and the pyruvate is formed at the N-terminus of the alpha chain, which is derived from the carboxyl end of the proenzyme. The autoendoproteolytic cleavage occurs by a canonical serine protease mechanism, in which the side chain hydroxyl group of the serine supplies its oxygen atom to form the C-terminus of the beta chain, while the remainder of the serine residue undergoes an oxidative deamination to produce ammonia and the pyruvoyl prosthetic group on the alpha chain. During this reaction, the Ser that is part of the protease active site of the proenzyme becomes the pyruvoyl prosthetic group, which constitutes an essential element of the active site of the mature decarboxylase.

It is found in the cell membrane. It catalyses the reaction a 1,2-diacyl-sn-glycero-3-phospho-L-serine + H(+) = a 1,2-diacyl-sn-glycero-3-phosphoethanolamine + CO2. The protein operates within phospholipid metabolism; phosphatidylethanolamine biosynthesis; phosphatidylethanolamine from CDP-diacylglycerol: step 2/2. In terms of biological role, catalyzes the formation of phosphatidylethanolamine (PtdEtn) from phosphatidylserine (PtdSer). This chain is Phosphatidylserine decarboxylase proenzyme, found in Escherichia coli O45:K1 (strain S88 / ExPEC).